The sequence spans 146 residues: uncharacterized protein (146 aa).

This is an uncharacterized protein from Saccharomyces cerevisiae (strain ATCC 204508 / S288c) (Baker's yeast).